Here is a 613-residue protein sequence, read N- to C-terminus: UvrABC system protein C (613 aa).

Residues 29–107 (DVAGVYKMLG…IKTLKPKYNI (79 aa)) form the GIY-YIG domain. Residues 217 to 252 (KELQRELFDSMRKFSDNLDYESAMVYRDRLQALKSI) form the UVR domain.

Belongs to the UvrC family. As to quaternary structure, interacts with UvrB in an incision complex.

It is found in the cytoplasm. The UvrABC repair system catalyzes the recognition and processing of DNA lesions. UvrC both incises the 5' and 3' sides of the lesion. The N-terminal half is responsible for the 3' incision and the C-terminal half is responsible for the 5' incision. In Anaplasma marginale (strain St. Maries), this protein is UvrABC system protein C.